Reading from the N-terminus, the 554-residue chain is Muellerian-inhibiting factor (554 aa).

Positions 1–24 (MQGPHLSPLVLLLATMGAVLQPEA) are cleaved as a signal peptide. Residues 25–446 (VENLATNTRG…GREGRGRTGR (422 aa)) constitute a propeptide that is removed on maturation. N-linked (GlcNAc...) asparagine glycosylation is found at Asn-62, Asn-326, and Asn-410. Intrachain disulfides connect Cys-456/Cys-520, Cys-482/Cys-551, and Cys-486/Cys-553.

This sequence belongs to the TGF-beta family. As to quaternary structure, homodimer; disulfide-linked. Post-translationally, preproprotein is proteolytically processed to generate N- and C-terminal cleavage products that homodimerize and associate to form a biologically active non-covalent complex. Binding of the non-covalent complex to AMHRII induces dissociation of the pro-region from the mature C-terminal dimer. The N-terminal portion of the protein, despite having no intrinsic activity, has the role of amplifying the activity of the C-terminus. As to expression, expressed in Sertoli cells of fetal testes, and in testes just after birth, but absent in adult testes. In female, AMH is expressed after birth in the granulosa cells of the follicle.

It localises to the secreted. In terms of biological role, plays an important role in several reproductive functions, including Muellerian duct regression during male fetal sexua,l differentiation and in the adult plays a role in Leydig cell differentiation and function. In female acts as a negative regulator of the primordial to primary follicle transition and decreases FSH sensitivity of growing follicles. Binds to its sole type II receptor, AMHR2 that recruits type I receptors ACVR1 and BMPR1A which subsequently activates the Smad pathway. This chain is Muellerian-inhibiting factor (Amh), found in Mus musculus (Mouse).